We begin with the raw amino-acid sequence, 538 residues long: Chaperonin GroEL 1 (538 aa).

ATP is bound by residues 30–33 (TLGP), Lys-51, 87–91 (DGTTT), Gly-415, 479–481 (NAA), and Asp-495.

The protein belongs to the chaperonin (HSP60) family. In terms of assembly, forms a cylinder of 14 subunits composed of two heptameric rings stacked back-to-back. Interacts with the co-chaperonin GroES.

Its subcellular location is the cytoplasm. It carries out the reaction ATP + H2O + a folded polypeptide = ADP + phosphate + an unfolded polypeptide.. Its function is as follows. Together with its co-chaperonin GroES, plays an essential role in assisting protein folding. The GroEL-GroES system forms a nano-cage that allows encapsulation of the non-native substrate proteins and provides a physical environment optimized to promote and accelerate protein folding. This Chromobacterium violaceum (strain ATCC 12472 / DSM 30191 / JCM 1249 / CCUG 213 / NBRC 12614 / NCIMB 9131 / NCTC 9757 / MK) protein is Chaperonin GroEL 1.